Reading from the N-terminus, the 778-residue chain is Endonuclease MutS2 (778 aa).

Residue 328 to 335 (GPNTGGKT) participates in ATP binding. One can recognise a Smr domain in the interval 703-778 (LDLRGKRYEE…GSGCTIANLG (76 aa)).

It belongs to the DNA mismatch repair MutS family. MutS2 subfamily. As to quaternary structure, homodimer. Binds to stalled ribosomes, contacting rRNA.

Its function is as follows. Endonuclease that is involved in the suppression of homologous recombination and thus may have a key role in the control of bacterial genetic diversity. In terms of biological role, acts as a ribosome collision sensor, splitting the ribosome into its 2 subunits. Detects stalled/collided 70S ribosomes which it binds and splits by an ATP-hydrolysis driven conformational change. Acts upstream of the ribosome quality control system (RQC), a ribosome-associated complex that mediates the extraction of incompletely synthesized nascent chains from stalled ribosomes and their subsequent degradation. Probably generates substrates for RQC. The polypeptide is Endonuclease MutS2 (Streptococcus equi subsp. zooepidemicus (strain H70)).